The sequence spans 260 residues: CD320 antigen (260 aa).

A signal peptide spans Met1–Ala28. The Extracellular portion of the chain corresponds to Ala29–Gly208. The LDL-receptor class A 1 domain maps to Ser46 to Arg83. Disulfide bonds link Cys47-Cys60, Cys54-Cys73, and Cys67-Cys82. Ca(2+)-binding residues include Trp65, Asp68, Asp70, Asp72, Asp78, and Glu79. N-linked (GlcNAc...) asparagine glycosylation is present at Asn118. Residues Pro123–Asp160 form the LDL-receptor class A 2 domain. Disulfide bonds link Cys124-Cys137, Cys131-Cys150, and Cys144-Cys159. Positions 142, 145, 147, 149, 155, and 156 each coordinate Ca(2+). Asn185 carries N-linked (GlcNAc...) asparagine glycosylation. The chain crosses the membrane as a helical span at residues Val209–Leu229. The Cytoplasmic segment spans residues Arg230–Ile260.

As to quaternary structure, interacts (via LDL-receptor class A domains) with TCN2.

The protein resides in the cell membrane. Its function is as follows. Receptor for transcobalamin saturated with cobalamin (TCbl). Plays an important role in cobalamin uptake. Plasma membrane protein that is expressed on follicular dendritic cells (FDC) and mediates interaction with germinal center B cells. Functions as a costimulator to promote B cell responses to antigenic stimuli; promotes B cell differentiation and proliferation. Germinal center-B (GC-B) cells differentiate into memory B-cells and plasma cells (PC) through interaction with T-cells and follicular dendritic cells (FDC). CD320 augments the proliferation of PC precursors generated by IL-10. This Mus musculus (Mouse) protein is CD320 antigen (Cd320).